The chain runs to 120 residues: Large ribosomal subunit protein bL12 (120 aa).

This sequence belongs to the bacterial ribosomal protein bL12 family. As to quaternary structure, homodimer. Part of the ribosomal stalk of the 50S ribosomal subunit. Forms a multimeric L10(L12)X complex, where L10 forms an elongated spine to which 2 to 4 L12 dimers bind in a sequential fashion. Binds GTP-bound translation factors.

Forms part of the ribosomal stalk which helps the ribosome interact with GTP-bound translation factors. Is thus essential for accurate translation. This chain is Large ribosomal subunit protein bL12, found in Lactobacillus helveticus (strain DPC 4571).